Consider the following 512-residue polypeptide: Cytochrome P450 1A2 (512 aa).

Residue Ser65 is glycosylated (O-linked (GlcNAc) serine). A substrate-binding site is contributed by Phe222. Residue Cys454 participates in heme binding.

Belongs to the cytochrome P450 family. In terms of assembly, interacts with PGRMC1; the interaction requires PGRMC1 homodimerization. Heme is required as a cofactor. Constitutively expressed in liver.

The protein localises to the endoplasmic reticulum membrane. It is found in the microsome membrane. The catalysed reaction is an organic molecule + reduced [NADPH--hemoprotein reductase] + O2 = an alcohol + oxidized [NADPH--hemoprotein reductase] + H2O + H(+). It catalyses the reaction 17beta-estradiol + reduced [NADPH--hemoprotein reductase] + O2 = 2-hydroxy-17beta-estradiol + oxidized [NADPH--hemoprotein reductase] + H2O + H(+). The enzyme catalyses 17beta-estradiol + reduced [NADPH--hemoprotein reductase] + O2 = 4-hydroxy-17beta-estradiol + oxidized [NADPH--hemoprotein reductase] + H2O + H(+). It carries out the reaction estrone + reduced [NADPH--hemoprotein reductase] + O2 = 2-hydroxyestrone + oxidized [NADPH--hemoprotein reductase] + H2O + H(+). The catalysed reaction is estrone + reduced [NADPH--hemoprotein reductase] + O2 = 4-hydroxyestrone + oxidized [NADPH--hemoprotein reductase] + H2O + H(+). It catalyses the reaction cholesterol + reduced [NADPH--hemoprotein reductase] + O2 = 25-hydroxycholesterol + oxidized [NADPH--hemoprotein reductase] + H2O + H(+). The enzyme catalyses all-trans-retinol + reduced [NADPH--hemoprotein reductase] + O2 = all-trans-retinal + oxidized [NADPH--hemoprotein reductase] + 2 H2O + H(+). It carries out the reaction all-trans-retinal + reduced [NADPH--hemoprotein reductase] + O2 = all-trans-retinoate + oxidized [NADPH--hemoprotein reductase] + H2O + 2 H(+). The catalysed reaction is (5Z,8Z,11Z,14Z)-eicosatetraenoate + reduced [NADPH--hemoprotein reductase] + O2 = (14R,15S)-epoxy-(5Z,8Z,11Z)-eicosatrienoate + oxidized [NADPH--hemoprotein reductase] + H2O + H(+). It catalyses the reaction (5Z,8Z,11Z,14Z)-eicosatetraenoate + reduced [NADPH--hemoprotein reductase] + O2 = (14S,15R)-epoxy-(5Z,8Z,11Z)-eicosatrienoate + oxidized [NADPH--hemoprotein reductase] + H2O + H(+). The enzyme catalyses (5Z,8Z,11Z,14Z,17Z)-eicosapentaenoate + reduced [NADPH--hemoprotein reductase] + O2 = (17R,18S)-epoxy-(5Z,8Z,11Z,14Z)-eicosatetraenoate + oxidized [NADPH--hemoprotein reductase] + H2O + H(+). It carries out the reaction (4Z,7Z,10Z,13Z,16Z,19Z)-docosahexaenoate + reduced [NADPH--hemoprotein reductase] + O2 = (19R,20S)-epoxy-(4Z,7Z,10Z,13Z,16Z)-docosapentaenoate + oxidized [NADPH--hemoprotein reductase] + H2O + H(+). The catalysed reaction is (5S)-hydroperoxy-(6E,8Z,11Z,14Z)-eicosatetraenoate = 5-oxo-(6E,8Z,11Z,14Z)-eicosatetraenoate + H2O. It catalyses the reaction (12S)-hydroperoxy-(5Z,8Z,10E,14Z)-eicosatetraenoate = 12-oxo-(5Z,8Z,10E,14Z)-eicosatetraenoate + H2O. The enzyme catalyses (15S)-hydroperoxy-(5Z,8Z,11Z,13E)-eicosatetraenoate = 15-oxo-(5Z,8Z,11Z,13E)-eicosatetraenoate + H2O. It carries out the reaction (13S)-hydroperoxy-(9Z,11E)-octadecadienoate = 13-oxo-(9Z,11E)-octadecadienoate + H2O. The catalysed reaction is (5Z,8Z,11Z,14Z)-eicosatetraenoate + reduced [NADPH--hemoprotein reductase] + O2 = 13-hydroxy-(5Z,8Z,11Z,14Z)-eicosatetraenoate + oxidized [NADPH--hemoprotein reductase] + H2O + H(+). It catalyses the reaction (5Z,8Z,11Z,14Z)-eicosatetraenoate + reduced [NADPH--hemoprotein reductase] + O2 = 19-hydroxy-(5Z,8Z,11Z,14Z)-eicosatetraenoate + oxidized [NADPH--hemoprotein reductase] + H2O + H(+). The enzyme catalyses (9Z,12Z)-octadecadienoate + reduced [NADPH--hemoprotein reductase] + O2 = 11-hydroxy-(9Z,12Z)-octadecadienoate + oxidized [NADPH--hemoprotein reductase] + H2O + H(+). It participates in cofactor metabolism; retinol metabolism. The protein operates within steroid metabolism; cholesterol metabolism. It functions in the pathway lipid metabolism; arachidonate metabolism. In terms of biological role, a cytochrome P450 monooxygenase involved in the metabolism of various endogenous substrates, including fatty acids, steroid hormones and vitamins. Mechanistically, uses molecular oxygen inserting one oxygen atom into a substrate, and reducing the second into a water molecule, with two electrons provided by NADPH via cytochrome P450 reductase (NADPH--hemoprotein reductase). Catalyzes the hydroxylation of carbon-hydrogen bonds. Exhibits high catalytic activity for the formation of hydroxyestrogens from estrone (E1) and 17beta-estradiol (E2), namely 2-hydroxy E1 and E2. Metabolizes cholesterol toward 25-hydroxycholesterol, a physiological regulator of cellular cholesterol homeostasis. May act as a major enzyme for all-trans retinoic acid biosynthesis in the liver. Catalyzes two successive oxidative transformation of all-trans retinol to all-trans retinal and then to the active form all-trans retinoic acid. Primarily catalyzes stereoselective epoxidation of the last double bond of polyunsaturated fatty acids (PUFA), displaying a strong preference for the (R,S) stereoisomer. Catalyzes bisallylic hydroxylation and omega-1 hydroxylation of PUFA. May also participate in eicosanoids metabolism by converting hydroperoxide species into oxo metabolites (lipoxygenase-like reaction, NADPH-independent). Plays a role in the oxidative metabolism of xenobiotics. Catalyzes the N-hydroxylation of heterocyclic amines and the O-deethylation of phenacetin. Metabolizes caffeine via N3-demethylation. This chain is Cytochrome P450 1A2 (CYP1A2), found in Canis lupus familiaris (Dog).